A 153-amino-acid chain; its full sequence is SsrA-binding protein (153 aa).

It belongs to the SmpB family.

The protein localises to the cytoplasm. Functionally, required for rescue of stalled ribosomes mediated by trans-translation. Binds to transfer-messenger RNA (tmRNA), required for stable association of tmRNA with ribosomes. tmRNA and SmpB together mimic tRNA shape, replacing the anticodon stem-loop with SmpB. tmRNA is encoded by the ssrA gene; the 2 termini fold to resemble tRNA(Ala) and it encodes a 'tag peptide', a short internal open reading frame. During trans-translation Ala-aminoacylated tmRNA acts like a tRNA, entering the A-site of stalled ribosomes, displacing the stalled mRNA. The ribosome then switches to translate the ORF on the tmRNA; the nascent peptide is terminated with the 'tag peptide' encoded by the tmRNA and targeted for degradation. The ribosome is freed to recommence translation, which seems to be the essential function of trans-translation. The sequence is that of SsrA-binding protein from Orientia tsutsugamushi (strain Ikeda) (Rickettsia tsutsugamushi).